A 443-amino-acid polypeptide reads, in one-letter code: Glucose-6-phosphate isomerase (443 aa).

E285 functions as the Proton donor in the catalytic mechanism. Catalysis depends on residues H306 and K420.

Belongs to the GPI family.

The protein localises to the cytoplasm. It catalyses the reaction alpha-D-glucose 6-phosphate = beta-D-fructose 6-phosphate. It participates in carbohydrate biosynthesis; gluconeogenesis. The protein operates within carbohydrate degradation; glycolysis; D-glyceraldehyde 3-phosphate and glycerone phosphate from D-glucose: step 2/4. In terms of biological role, catalyzes the reversible isomerization of glucose-6-phosphate to fructose-6-phosphate. This is Glucose-6-phosphate isomerase from Staphylococcus aureus (strain NCTC 8325 / PS 47).